The following is an 897-amino-acid chain: Probable basic-leucine zipper transcription factor R (897 aa).

Disordered stretches follow at residues 38–88 and 128–198; these read DDNI…NIET and YQQR…NSNS. Positions 44–75 are enriched in low complexity; that stretch reads NNNNNNNNNNNNNNNNNNNNNNNNNNNNNNNN. The span at 76 to 88 shows a compositional bias: polar residues; it reads IGSPQIMNENIET. The stretch at 94-137 forms a coiled coil; the sequence is QYLERLQSIQQQQHQCQTQIQQQLQNYQQQYEDQYQQRQQQYQD. Residues 128-140 are compositionally biased toward low complexity; the sequence is YQQRQQQYQDQYQ. Residues 141–157 are compositionally biased toward polar residues; sequence KPYSSPPLNFNSIPPIT. The segment covering 158–198 has biased composition (low complexity); that stretch reads NNNNNNNNNNNNNNNNNNSNSNSNSNSNSNSNSNSNSNSNS. 2 coiled-coil regions span residues 228 to 258 and 330 to 407; these read LQQQQQQQQQQQQQQQQQQQQQQQQQQQQQQ and QQLQ…QQQQ. The interval 461-516 is disordered; that stretch reads LQLPTPFYSPQQQQQQHTPISSFIPPPSLPSSPPSPPSPPSPPPQQQQQQQQQQQQ. Pro residues predominate over residues 484–505; it reads IPPPSLPSSPPSPPSPPSPPPQ. Residues 506–516 are compositionally biased toward low complexity; the sequence is QQQQQQQQQQQ. Residues 557-620 form the bZIP domain; sequence ESKESIKKYN…SIEMMRMEPE (64 aa). The interval 559–564 is basic motif; the sequence is KESIKK. Positions 569–576 are leucine-zipper; sequence IASRNYRL.

It belongs to the bZIP family.

The protein localises to the nucleus. Its function is as follows. Probable transcriptional regulator. The chain is Probable basic-leucine zipper transcription factor R (bzpR) from Dictyostelium discoideum (Social amoeba).